Reading from the N-terminus, the 170-residue chain is Ankyrin repeat-containing protein C105.02c (170 aa).

2 ANK repeats span residues 46-76 (LGNDCVHVCTKYGSLECLDWLLDISGVNLNN) and 81-116 (TGDTPLHFAVMFIKKDQETALRMVEMLMEVGADPLL). Positions 150–170 (SADVVADDDDEEEGSGESDEE) are disordered. Residues 154 to 170 (VADDDDEEEGSGESDEE) are compositionally biased toward acidic residues.

It is found in the cytoplasm. The protein localises to the nucleus. This is Ankyrin repeat-containing protein C105.02c from Schizosaccharomyces pombe (strain 972 / ATCC 24843) (Fission yeast).